We begin with the raw amino-acid sequence, 315 residues long: tRNA dimethylallyltransferase (315 aa).

Residue 13–20 participates in ATP binding; sequence GPTASGKT. 15–20 contacts substrate; that stretch reads TASGKT. 4 interaction with substrate tRNA regions span residues 38-41, 162-166, 243-248, and 276-283; these read DSAL, QRLSR, RCVGYR, and KRQITWLR.

It belongs to the IPP transferase family. Monomer. It depends on Mg(2+) as a cofactor.

It catalyses the reaction adenosine(37) in tRNA + dimethylallyl diphosphate = N(6)-dimethylallyladenosine(37) in tRNA + diphosphate. In terms of biological role, catalyzes the transfer of a dimethylallyl group onto the adenine at position 37 in tRNAs that read codons beginning with uridine, leading to the formation of N6-(dimethylallyl)adenosine (i(6)A). The polypeptide is tRNA dimethylallyltransferase (Vibrio vulnificus (strain YJ016)).